A 322-amino-acid polypeptide reads, in one-letter code: 4-diphosphocytidyl-2-C-methyl-D-erythritol kinase (322 aa).

Lys-25 is an active-site residue. ATP is bound at residue 110-120; that stretch reads PVAGGMAGGSA. The active site involves Asp-152.

It belongs to the GHMP kinase family. IspE subfamily.

It catalyses the reaction 4-CDP-2-C-methyl-D-erythritol + ATP = 4-CDP-2-C-methyl-D-erythritol 2-phosphate + ADP + H(+). It functions in the pathway isoprenoid biosynthesis; isopentenyl diphosphate biosynthesis via DXP pathway; isopentenyl diphosphate from 1-deoxy-D-xylulose 5-phosphate: step 3/6. Catalyzes the phosphorylation of the position 2 hydroxy group of 4-diphosphocytidyl-2C-methyl-D-erythritol. The polypeptide is 4-diphosphocytidyl-2-C-methyl-D-erythritol kinase (Mycolicibacterium gilvum (strain PYR-GCK) (Mycobacterium gilvum (strain PYR-GCK))).